The following is a 53-amino-acid chain: Non-classical export protein 1 (53 aa).

A helical transmembrane segment spans residues 7–29 (FLLGKFSDPLLAIMVGCLSYYVY).

It belongs to the NCE101 family.

Its subcellular location is the membrane. In terms of biological role, involved in a novel pathway of export of proteins that lack a cleavable signal sequence. May be part of the export machinery or may also be a substrate for non-classical export. This is Non-classical export protein 1 (NCE101) from Saccharomyces cerevisiae (strain ATCC 204508 / S288c) (Baker's yeast).